A 927-amino-acid polypeptide reads, in one-letter code: Perchlorate reductase subunit alpha (927 aa).

The tat-type signal signal peptide spans M1–A31. Residues D53 to H116 enclose the 4Fe-4S Mo/W bis-MGD-type domain. 4 residues coordinate [4Fe-4S] cluster: H60, C64, C68, and C102. A Mo-bis(molybdopterin guanine dinucleotide)-binding site is contributed by D198.

This sequence belongs to the prokaryotic molybdopterin-containing oxidoreductase family. Heterotrimer of alpha, beta and gamma subunits. It depends on [4Fe-4S] cluster as a cofactor. Requires Mo-bis(molybdopterin guanine dinucleotide) as cofactor. Post-translationally, predicted to be exported by the Tat system. The position of the signal peptide cleavage has not been experimentally proven.

It localises to the periplasm. Component of the perchlorate reductase that catalyzes the reduction of perchlorate to chlorite and allows anaerobic growth on perchlorate as the sole electron acceptor. Is probably also able to reduce chlorate to chlorite. The alpha subunit is likely the catalytic subunit. This Dechloromonas aromatica (strain RCB) protein is Perchlorate reductase subunit alpha (pcrA).